The following is a 466-amino-acid chain: Zinc finger protein ZIC 3 (466 aa).

A compositionally biased stretch (polar residues) spans 65-80 (DLSSGQSSAFTPQGSG). Residues 65 to 103 (DLSSGQSSAFTPQGSGYANALGHHHHHHHHHHASQVPTY) are disordered. Basic residues predominate over residues 86–97 (GHHHHHHHHHHA). Lysine 247 participates in a covalent cross-link: Glycyl lysine isopeptide (Lys-Gly) (interchain with G-Cter in SUMO2). The C2H2-type 1; atypical zinc-finger motif lies at 250 to 285 (LSCKWIEEAQLSRPKKSCDRTFSTMHELVTHVTMEH). The C2H2-type 2; atypical zinc-finger motif lies at 294–321 (HVCYWEECPREGKSFKAKYKLVNHIRVH). 2 consecutive short sequence motifs (nuclear localization signal) follow at residues 296–321 (CYWE…IRVH) and 329–351 (CPFP…KRTH). 3 C2H2-type zinc fingers span residues 327–351 (FPCP…KRTH), 357–381 (FKCE…MHVH), and 387–409 (YICK…MKVH). The segment at 403-466 (RKHMKVHESQ…LPPNFNEWYV (64 aa)) is disordered. A compositionally biased stretch (low complexity) spans 411–427 (SQGSDSSPAASSGYESS). The segment covering 434-454 (SANSKDTTKTPSAVQTSTSHN) has biased composition (polar residues).

The protein belongs to the GLI C2H2-type zinc-finger protein family. In terms of assembly, interacts with KPNA1 and KPNA6. Interacts (via C2H2-type domains 3, 4 and 5) with GLI3; the interaction enhances its transcriptional activity. Interacts (via the C2H2-type domains 3, 4 and 5) with MDFIC (via the C2H2-type domains 3, 4 and 5); the interaction reduces its transcriptional activity. In terms of tissue distribution, CNS. A high level expression is seen in the cerebellum.

Its subcellular location is the nucleus. It is found in the cytoplasm. Functionally, acts as a transcriptional activator. Required in the earliest stages in both axial midline development and left-right (LR) asymmetry specification. Binds to the minimal GLI-consensus sequence 5'-GGGTGGTC-3'. This is Zinc finger protein ZIC 3 (Zic3) from Mus musculus (Mouse).